The following is a 96-amino-acid chain: Large ribosomal subunit protein eL43 (96 aa).

The C4-type zinc finger occupies 41–62 (CPVCAFPKLKRVGTSIWVCDKC).

The protein belongs to the eukaryotic ribosomal protein eL43 family. It depends on Zn(2+) as a cofactor.

The protein is Large ribosomal subunit protein eL43 of Methanococcus maripaludis (strain C6 / ATCC BAA-1332).